The sequence spans 538 residues: DALR anticodon-binding domain-containing protein 3 (538 aa).

In terms of assembly, part of a complex containing tRNA(Arg) and METTL2. Interacts with tRNA(Arg)(CCU) and tRNA(Arg)(UCU). Interacts with METTL2.

Involved in tRNA methylation. Facilitates the recognition and targeting of tRNA(Arg)(CCU) and tRNA(Arg)(UCU) substrates for N(3)-methylcytidine modification by METTL2. The chain is DALR anticodon-binding domain-containing protein 3 (Dalrd3) from Mus musculus (Mouse).